The chain runs to 1358 residues: Tenascin-R (1358 aa).

A signal peptide spans 1-31 (MGADGETVVLKNMLIGINLILLGSMIKPSEC). Residues Thr36 and Thr37 are each glycosylated (O-linked (GalNAc...) threonine). Residue Asn55 is glycosylated (N-linked (GlcNAc...) asparagine). Positions 127–157 (CASSAQVLQELLSRIEMLEREVSVLRDQCNA) form a coiled coil. Ser176 carries O-linked (Xyl...) (chondroitin sulfate) serine glycosylation. Residues Asn180 and Asn198 are each glycosylated (N-linked (GlcNAc...) asparagine). EGF-like domains lie at 188-199 (CICNEGWFGKNC), 219-230 (CICDSEYSGDDC), and 250-261 (CVCEEPYTGEDC). Ser271 is a glycosylation site (O-linked (Xyl...) (chondroitin sulfate) serine). N-linked (GlcNAc...) asparagine glycosylation is present at Asn278. Positions 281 to 292 (CLCEEGYVGEDC) constitute an EGF-like 4 domain. 3 disulfides stabilise this stretch: Cys292/Cys301, Cys297/Cys312, and Cys314/Cys323. The O-linked (Xyl...) (chondroitin sulfate) serine glycan is linked to Ser302. In terms of domain architecture, EGF-like 5 spans 312–323 (CVCEEGYQGPDC). 9 consecutive Fibronectin type-III domains span residues 328 to 420 (PPED…TPQG), 421 to 505 (LQFK…TVID), 506 to 595 (GPTQ…TEID), 596 to 687 (APKN…TELD), 688 to 777 (SPRD…FRPI), 778 to 865 (SHLH…TGID), 866 to 955 (PPKD…AMDN), 956 to 1042 (PVDL…TLLD), and 1043 to 1130 (PPAN…TGGR). Residues Asn392, Asn470, and Asn581 are each glycosylated (N-linked (GlcNAc...) asparagine). Residue Ser724 is modified to Phosphoserine. Asn791, Asn874, Asn1036, Asn1046, and Asn1261 each carry an N-linked (GlcNAc...) asparagine glycan. A Fibrinogen C-terminal domain is found at 1129 to 1344 (GRVFPHPQDC…FVEMKMRPYN (216 aa)).

It belongs to the tenascin family. Forms oligomers. Interacts with CNTN1, TNC, and FN1. Interacts with BCAN and ACAN in a calcium-dependent manner. Interacts with SCN2B, PTPRZ1, and CSPG3. Contains N-linked oligosaccharides, O-linked sialylated structures and O-linked chondroitin sulfate glycosaminoglycans. Contains N-linked oligosaccharides with a sulfated carbohydrate structure. O-glycosylated on Thr-36 or Thr-37 with a core 1 or possibly core 8 glycan. As to expression, brain specific.

It localises to the secreted. Its subcellular location is the extracellular space. The protein resides in the extracellular matrix. In terms of biological role, neural extracellular matrix (ECM) protein involved in interactions with different cells and matrix components. These interactions can influence cellular behavior by either evoking a stable adhesion and differentiation, or repulsion and inhibition of neurite growth. Binding to cell surface gangliosides inhibits RGD-dependent integrin-mediated cell adhesion and results in an inhibition of PTK2/FAK1 (FAK) phosphorylation and cell detachment. Binding to membrane surface sulfatides results in a oligodendrocyte adhesion and differentiation. Interaction with CNTN1 induces a repulsion of neurons and an inhibition of neurite outgrowth. Interacts with SCN2B may play a crucial role in clustering and regulation of activity of sodium channels at nodes of Ranvier. TNR-linked chondroitin sulfate glycosaminoglycans are involved in the interaction with FN1 and mediate inhibition of cell adhesion and neurite outgrowth. The highly regulated addition of sulfated carbohydrate structure may modulate the adhesive properties of TNR over the course of development and during synapse maintenance. This chain is Tenascin-R (TNR), found in Homo sapiens (Human).